Consider the following 163-residue polypeptide: Ureidoglycolate lyase 2 (163 aa).

The protein belongs to the ureidoglycolate lyase family. In terms of assembly, homodimer. Ni(2+) serves as cofactor.

It catalyses the reaction (S)-ureidoglycolate = urea + glyoxylate. Its pathway is nitrogen metabolism; (S)-allantoin degradation. Its function is as follows. Catalyzes the catabolism of the allantoin degradation intermediate (S)-ureidoglycolate, generating urea and glyoxylate. Involved in the utilization of allantoin as nitrogen source. This is Ureidoglycolate lyase 2 from Rhizobium meliloti (strain 1021) (Ensifer meliloti).